Here is a 64-residue protein sequence, read N- to C-terminus: Beta-defensin 5 (64 aa).

The first 23 residues, Met1–Ser23, serve as a signal peptide directing secretion. 3 cysteine pairs are disulfide-bonded: Cys32/Cys60, Cys39/Cys53, and Cys43/Cys61.

It belongs to the beta-defensin family.

It is found in the secreted. Functionally, has antibacterial activity. This chain is Beta-defensin 5 (Defb5), found in Mus musculus (Mouse).